The following is a 348-amino-acid chain: GTP 3',8-cyclase (348 aa).

Positions 24 to 242 constitute a Radical SAM core domain; sequence PFGRAVTYLR…EKQFTLTDID (219 aa). A GTP-binding site is contributed by Arg33. Residues Cys40 and Cys44 each contribute to the [4Fe-4S] cluster site. Tyr46 is an S-adenosyl-L-methionine binding site. [4Fe-4S] cluster is bound at residue Cys47. Arg82 is a GTP binding site. Residue Gly86 coordinates S-adenosyl-L-methionine. Thr115 is a binding site for GTP. Residue Ser139 participates in S-adenosyl-L-methionine binding. GTP is bound at residue Lys175. Residue Met209 participates in S-adenosyl-L-methionine binding. Positions 272 and 275 each coordinate [4Fe-4S] cluster. 277 to 279 serves as a coordination point for GTP; the sequence is RVR. Cys289 provides a ligand contact to [4Fe-4S] cluster.

It belongs to the radical SAM superfamily. MoaA family. In terms of assembly, monomer and homodimer. It depends on [4Fe-4S] cluster as a cofactor.

It catalyses the reaction GTP + AH2 + S-adenosyl-L-methionine = (8S)-3',8-cyclo-7,8-dihydroguanosine 5'-triphosphate + 5'-deoxyadenosine + L-methionine + A + H(+). Its pathway is cofactor biosynthesis; molybdopterin biosynthesis. Catalyzes the cyclization of GTP to (8S)-3',8-cyclo-7,8-dihydroguanosine 5'-triphosphate. This is GTP 3',8-cyclase from Rhizobium etli (strain CIAT 652).